Reading from the N-terminus, the 122-residue chain is Serum amyloid A-1 protein (122 aa).

The signal sequence occupies residues 1–19 (MKLLTSLVFCSLLLGVCHG). The segment at 20-45 (GFFSFVHEAFQGAGDMWRAYTDMKEA) is important for amyloid formation. The segment covering 91–108 (HEDTIADQEANRHGRSGK) has biased composition (basic and acidic residues). Residues 91 to 122 (HEDTIADQEANRHGRSGKDPNYYRPPGLPDKY) form a disordered region.

The protein belongs to the SAA family. In terms of assembly, homohexamer; dimer of trimers. Can form amyloid fibrils after partial proteolysis; the native, undenatured protein does not form amyloid fibrils (in vitro). Apolipoprotein of the HDL complex. Binds to heparin. In terms of tissue distribution, detected in blood plasma (at protein level). Detected in liver.

It localises to the secreted. Its function is as follows. Major acute phase protein. The sequence is that of Serum amyloid A-1 protein (Saa1) from Mus musculus (Mouse).